Here is a 388-residue protein sequence, read N- to C-terminus: Lipid-A-disaccharide synthase (388 aa).

The protein belongs to the LpxB family.

The catalysed reaction is a lipid X + a UDP-2-N,3-O-bis[(3R)-3-hydroxyacyl]-alpha-D-glucosamine = a lipid A disaccharide + UDP + H(+). Its pathway is bacterial outer membrane biogenesis; LPS lipid A biosynthesis. In terms of biological role, condensation of UDP-2,3-diacylglucosamine and 2,3-diacylglucosamine-1-phosphate to form lipid A disaccharide, a precursor of lipid A, a phosphorylated glycolipid that anchors the lipopolysaccharide to the outer membrane of the cell. This Burkholderia mallei (strain ATCC 23344) protein is Lipid-A-disaccharide synthase.